Here is a 1150-residue protein sequence, read N- to C-terminus: Cell division cycle and apoptosis regulator protein 1 (1150 aa).

An interaction with AR region spans residues 1 to 249 (MAQFGGQKNP…TQPQPQSLLQ (249 aa)). 2 disordered regions span residues 124–146 (PTAQ…QPQK) and 285–354 (IVSQ…SPRR). The segment covering 134 to 146 (TPRSSQQQTQPQK) has biased composition (low complexity). The segment at 203–660 (QRIQTLPNQN…RALSSKGLKS (458 aa)) is interaction with GATA2. Basic and acidic residues-rich tracts occupy residues 293-334 (RRLD…ERSP) and 341-352 (ERSPRRERERSP). Ser-456 is subject to Phosphoserine. The stretch at 594–618 (KQQLVEKLQGERKEADGEQDEEEKD) forms a coiled coil. The disordered stretch occupies residues 600–638 (KLQGERKEADGEQDEEEKDDGEAKEISTPTHWSKLDPKT). Positions 610-621 (GEQDEEEKDDGE) are enriched in acidic residues. Thr-627 is modified (phosphothreonine). An SAP domain is found at 636-670 (PKTMKVNDLRKELESRALSSKGLKSQLIARLTKQL). Lys-637 is covalently cross-linked (Glycyl lysine isopeptide (Lys-Gly) (interchain with G-Cter in ubiquitin)). The interaction with GATA1 stretch occupies residues 643–1150 (DLRKELESRA…QKSKENGASV (508 aa)). Thr-667 bears the Phosphothreonine mark. Basic and acidic residues-rich tracts occupy residues 673-687 (EEQK…KSEK), 694-713 (DRKS…EEIE), 796-817 (KEDK…KKEE), and 832-855 (SGDD…KDDS). Disordered regions lie at residues 673–713 (EEQK…EEIE) and 796–915 (KEDK…EKEK). Phosphoserine occurs at positions 685 and 697. Acidic residues predominate over residues 856 to 889 (KDDDETEEDNNQDEYDPMEAEEAEDEEDDRDEEE). Position 861 is a phosphothreonine (Thr-861). Residues 890-915 (MTKRDDKRDINRYCKERPSKDKEKEK) are compositionally biased toward basic and acidic residues. Lys-1012 participates in a covalent cross-link: Glycyl lysine isopeptide (Lys-Gly) (interchain with G-Cter in SUMO1); alternate. Residue Lys-1012 forms a Glycyl lysine isopeptide (Lys-Gly) (interchain with G-Cter in SUMO2); alternate linkage. Positions 1033–1114 (DVGSLLQKLE…LQFENQMNKT (82 aa)) form a coiled coil. Glycyl lysine isopeptide (Lys-Gly) (interchain with G-Cter in SUMO2) cross-links involve residues Lys-1067 and Lys-1135.

Directly interacts with ESR1, NR3C1 and p53/TP53. Interacts (via N-terminus) with CALCOCO1. Interacts with MED1. Interacts with GATA1. Interacts with AR and GATA2. As to expression, expressed in various epithelial cancer cell lines, including breast, colon, prostate, pancreatic and leukemia. Expression is regulated by growth factors.

The protein localises to the cytoplasm. It is found in the perinuclear region. In terms of biological role, associates with components of the Mediator and p160 coactivator complexes that play a role as intermediaries transducing regulatory signals from upstream transcriptional activator proteins to basal transcription machinery at the core promoter. Recruited to endogenous nuclear receptor target genes in response to the appropriate hormone. Also functions as a p53 coactivator. May thus play an important role in transcriptional regulation. May be involved in apoptosis signaling in the presence of the reinoid CD437. Apoptosis induction involves sequestration of 14-3-3 protein(s) and mediated altered expression of multiple cell cycle regulatory genes including MYC, CCNB1 and CDKN1A. Plays a role in cell cycle progression and/or cell proliferation. In association with CALCOCO1 enhances GATA1- and MED1-mediated transcriptional activation from the gamma-globin promoter during erythroid differentiation of K562 erythroleukemia cells. Can act as a both a coactivator and corepressor of AR-mediated transcription. Contributes to chromatin looping and AR transcription complex assembly by stabilizing AR-GATA2 association on chromatin and facilitating MED1 and RNA polymerase II recruitment to AR-binding sites. May play an important role in the growth and tumorigenesis of prostate cancer cells. The sequence is that of Cell division cycle and apoptosis regulator protein 1 (CCAR1) from Homo sapiens (Human).